Consider the following 185-residue polypeptide: Peptidyl-tRNA hydrolase (185 aa).

F12 serves as a coordination point for tRNA. H17 acts as the Proton acceptor in catalysis. Residues Y61, N63, and N109 each contribute to the tRNA site.

The protein belongs to the PTH family. Monomer.

The protein localises to the cytoplasm. It catalyses the reaction an N-acyl-L-alpha-aminoacyl-tRNA + H2O = an N-acyl-L-amino acid + a tRNA + H(+). Hydrolyzes ribosome-free peptidyl-tRNAs (with 1 or more amino acids incorporated), which drop off the ribosome during protein synthesis, or as a result of ribosome stalling. Its function is as follows. Catalyzes the release of premature peptidyl moieties from peptidyl-tRNA molecules trapped in stalled 50S ribosomal subunits, and thus maintains levels of free tRNAs and 50S ribosomes. The protein is Peptidyl-tRNA hydrolase of Borrelia garinii subsp. bavariensis (strain ATCC BAA-2496 / DSM 23469 / PBi) (Borreliella bavariensis).